A 351-amino-acid chain; its full sequence is MPQKKLLQKLLAGEDFSQEEMILCMNNIMDGLFSEMVIAALLALLQKKGVTPTETAGAYYSLMEKAVTIELDENAVDTCGTGGDHAGTFNISTTASIIANSAGVRIAKHGNRSVTSSCGSADVLEALGFTIDLPPEATKELFQESGFAFLFAPLYHPSMKRVAPVRRELGIRTIFNILGPLINPARAKRQLVGVFNRELMELYTEVLLQTGARRAMIVHAMTAEGIALDEPSLNGPTHIVEIHRGTVTEHTVYPEDFGLARHSLSEIQGGERDENARIIRQILDGSAPAAHRDAALFTTAMACYVSGKARCIDDGLDIAREALESGKSEKKFNEILKINAELSRKYRSVVN.

Residues glycine 80, 83-84 (GD), threonine 88, 90-93 (NIST), 108-116 (KHGNRSVTS), and serine 120 each bind 5-phospho-alpha-D-ribose 1-diphosphate. Glycine 80 contacts anthranilate. Serine 92 is a Mg(2+) binding site. Residue asparagine 111 participates in anthranilate binding. An anthranilate-binding site is contributed by arginine 166. Mg(2+) is bound by residues aspartate 229 and glutamate 230.

It belongs to the anthranilate phosphoribosyltransferase family. Homodimer. The cofactor is Mg(2+).

The enzyme catalyses N-(5-phospho-beta-D-ribosyl)anthranilate + diphosphate = 5-phospho-alpha-D-ribose 1-diphosphate + anthranilate. It functions in the pathway amino-acid biosynthesis; L-tryptophan biosynthesis; L-tryptophan from chorismate: step 2/5. Its function is as follows. Catalyzes the transfer of the phosphoribosyl group of 5-phosphorylribose-1-pyrophosphate (PRPP) to anthranilate to yield N-(5'-phosphoribosyl)-anthranilate (PRA). The chain is Anthranilate phosphoribosyltransferase from Pelodictyon phaeoclathratiforme (strain DSM 5477 / BU-1).